A 404-amino-acid polypeptide reads, in one-letter code: Probable pectate lyase 18 (404 aa).

A signal peptide spans 1–20; sequence MSTLFFTFSLLLLAPLLVIS. Asparagine 37 carries N-linked (GlcNAc...) asparagine glycosylation. Cysteine 159 and cysteine 178 are joined by a disulfide. An N-linked (GlcNAc...) asparagine glycan is attached at asparagine 191. Ca(2+) is bound by residues aspartate 200, aspartate 202, aspartate 224, and aspartate 228. Arginine 280 is an active-site residue.

It belongs to the polysaccharide lyase 1 family. Ca(2+) serves as cofactor. Predominantly found in the pistil where it is found in the outer five layers of the strands of transmitting tissue within the upper two-thirds of the style. Found at much lower levels in the anthers and vegetative organs.

It localises to the secreted. It carries out the reaction Eliminative cleavage of (1-&gt;4)-alpha-D-galacturonan to give oligosaccharides with 4-deoxy-alpha-D-galact-4-enuronosyl groups at their non-reducing ends.. The protein operates within glycan metabolism; pectin degradation; 2-dehydro-3-deoxy-D-gluconate from pectin: step 2/5. May have a role in the development of the transmitting tissue of the style and/or in the events related to pollination such as some aspect in the facilitation of compatible pollen tube growth. This chain is Probable pectate lyase 18, found in Solanum lycopersicum (Tomato).